Consider the following 360-residue polypeptide: Phospho-N-acetylmuramoyl-pentapeptide-transferase (360 aa).

10 helical membrane passes run 27–47 (IVSL…LIAW), 72–92 (PTMG…MWAY), 94–114 (SNPY…VGFI), 132–152 (WKYF…YSIG), 168–188 (IMPQ…VGTS), 199–219 (GLAI…AWAT), 236–256 (AGEL…FLWF), 263–283 (VFMG…IAVL), 288–308 (FLLV…ILQV), and 338–358 (VIVR…ATLK).

It belongs to the glycosyltransferase 4 family. MraY subfamily. Mg(2+) serves as cofactor.

The protein localises to the cell inner membrane. The catalysed reaction is UDP-N-acetyl-alpha-D-muramoyl-L-alanyl-gamma-D-glutamyl-meso-2,6-diaminopimeloyl-D-alanyl-D-alanine + di-trans,octa-cis-undecaprenyl phosphate = di-trans,octa-cis-undecaprenyl diphospho-N-acetyl-alpha-D-muramoyl-L-alanyl-D-glutamyl-meso-2,6-diaminopimeloyl-D-alanyl-D-alanine + UMP. The protein operates within cell wall biogenesis; peptidoglycan biosynthesis. In terms of biological role, catalyzes the initial step of the lipid cycle reactions in the biosynthesis of the cell wall peptidoglycan: transfers peptidoglycan precursor phospho-MurNAc-pentapeptide from UDP-MurNAc-pentapeptide onto the lipid carrier undecaprenyl phosphate, yielding undecaprenyl-pyrophosphoryl-MurNAc-pentapeptide, known as lipid I. In Yersinia pestis bv. Antiqua (strain Angola), this protein is Phospho-N-acetylmuramoyl-pentapeptide-transferase.